A 175-amino-acid chain; its full sequence is MTVSKSNQILSNDRDLENISNKNIEDIKEFINTANSRLDAIDSITNNSHAIAADAVTAMICENQDSVNTKISLDTTNKMSVCLRDGEIILRIVSYLLISDDESVLSKNCLKDLKNTYLALGVPLKNAIRVFELMRDATISDLKSTVNSMKGEKEFLSDLISNTEFQFERIINLLR.

C82 contacts (2R,3E)-phycoerythrobilin.

This sequence belongs to the phycobiliprotein family. As to quaternary structure, homodimer. Post-translationally, contains one covalently linked phycoerythrobilin chromophore.

In terms of biological role, green-light absorbing phycoerythrin of unknown function. This chain is R-phycoerythrin subunit beta (cpeB), found in Prochlorococcus marinus subsp. pastoris (strain CCMP1986 / NIES-2087 / MED4).